The sequence spans 342 residues: Cytosolic Fe-S cluster assembly factor NBP35 (342 aa).

Residues Cys-33, Cys-47, Cys-50, and Cys-56 each coordinate [4Fe-4S] cluster. Gly-86 to Ser-93 is an ATP binding site. Residues Cys-259 and Cys-262 each contribute to the [4Fe-4S] cluster site.

Belongs to the Mrp/NBP35 ATP-binding proteins family. NUBP1/NBP35 subfamily. In terms of assembly, heterotetramer of 2 NBP35 and 2 CFD1 chains. [4Fe-4S] cluster serves as cofactor.

It localises to the cytoplasm. Its function is as follows. Component of the cytosolic iron-sulfur (Fe/S) protein assembly (CIA) machinery. Required for maturation of extramitochondrial Fe-S proteins. The NBP35-CFD1 heterotetramer forms a Fe-S scaffold complex, mediating the de novo assembly of an Fe-S cluster and its transfer to target apoproteins. The protein is Cytosolic Fe-S cluster assembly factor NBP35 of Gibberella zeae (strain ATCC MYA-4620 / CBS 123657 / FGSC 9075 / NRRL 31084 / PH-1) (Wheat head blight fungus).